The following is a 100-amino-acid chain: Small cysteine and glycine repeat-containing protein 3 (100 aa).

The tract at residues 4-82 (CGCGSCGGCG…RRTCRSCGCG (79 aa)) is 13 X 2 AA repeats of CG.

It belongs to the KRTAP type 28 family.

Functionally, in the hair cortex, hair keratin intermediate filaments are embedded in an interfilamentous matrix, consisting of hair keratin-associated proteins (KRTAP), which are essential for the formation of a rigid and resistant hair shaft through their extensive disulfide bond cross-linking with abundant cysteine residues of hair keratins. The matrix proteins include the high-sulfur and high-glycine-tyrosine keratins. In Homo sapiens (Human), this protein is Small cysteine and glycine repeat-containing protein 3.